The following is a 357-amino-acid chain: RGG repeats nuclear RNA binding protein C (357 aa).

Alanine 2 carries the post-translational modification N-acetylalanine. A disordered region spans residues serine 25–threonine 232. Positions alanine 31–threonine 45 are enriched in low complexity. 2 stretches are compositionally biased toward gly residues: residues glycine 63–glycine 82 and serine 114–arginine 128. Residues aspartate 143–serine 155 show a composition bias toward basic and acidic residues. The segment covering histidine 159 to asparagine 172 has biased composition (gly residues). Residues glutamate 190–threonine 232 are compositionally biased toward basic and acidic residues. The 61-residue stretch at isoleucine 239–serine 299 folds into the FF domain. A disordered region spans residues proline 308–glycine 357. Gly residues predominate over residues glycine 316–glycine 334. A Phosphoserine modification is found at serine 355.

It belongs to the SERBP1-HABP4 family.

It is found in the nucleus. The protein localises to the cytoplasm. Its subcellular location is the perinuclear region. Ribosome-binding protein that acts as a regulator of mRNA translation by promoting ribosome inactivation. Binds RNA. In Arabidopsis thaliana (Mouse-ear cress), this protein is RGG repeats nuclear RNA binding protein C.